Reading from the N-terminus, the 357-residue chain is Protein-L-isoaspartate O-methyltransferase domain-containing protein 1 (357 aa).

A lipid anchor (N-myristoyl glycine) is attached at G2. Residue S64 is part of the active site. AdoMet binding motif stretches follow at residues 85 to 94, 160 to 164, and 181 to 191; these read LNLGSGTGYL, YDRIY, and LKVGGILVMPI. A BC-box region spans residues 240 to 250; the sequence is VRNLQDLARIY. The interval 299–331 is disordered; sequence PLDSEEDEKMEEDSKEEEEKEHIEAMKREEPPQ. Acidic residues predominate over residues 301–317; that stretch reads DSEEDEKMEEDSKEEEE. The segment covering 318-331 has biased composition (basic and acidic residues); the sequence is KEHIEAMKREEPPQ. A CUL-box region spans residues 341 to 344; sequence LPLP.

Belongs to the methyltransferase superfamily. L-isoaspartyl/D-aspartyl protein methyltransferase family. As to quaternary structure, component of the probable ECS(PCMTD1) E3 ubiquitin-protein ligase complex, at least composed of CUL5, ELOB, ELOC, RBX2 and PCMTD1. Interacts (via the BC-box) with ELOB and ELOC; the interaction is direct and stabilizes PCMTD1.

The protein localises to the cytoplasm. It is found in the membrane. In terms of biological role, substrate recognition component of an ECS (Elongin BC-CUL5-SOCS-box protein) E3 ubiquitin ligase complex which mediates the ubiquitination and subsequent proteasomal degradation of target proteins. Specifically binds to the methyltransferase cofactor S-adenosylmethionine (AdoMet) via the N-terminal AdoMet binding motif, but does not display methyltransferase activity. May provide an alternate maintenance pathway for modified proteins by acting as a damage-specific E3 ubiquitin ligase adaptor protein. The chain is Protein-L-isoaspartate O-methyltransferase domain-containing protein 1 (Pcmtd1) from Mus musculus (Mouse).